The primary structure comprises 194 residues: MEETFQLLYDTYHQDLYQFLFYMVKDKNQTEDLLQEVYIRVLNSYHTFEGRSSEKTWLLSIARHVAIDWFRKQQTIRQRILGTFDWDTQDVRDQQLLPDELAVQHENVREIYAALDQCTIDQRAVIILRFIQGYSIQETAKALRFSESKVKTTQHRGLKVLRKHMELLREELMDDEVRMERRTDKGVVKSTSGS.

The short motif at Asp32–Tyr45 is the Polymerase core binding element. The segment at residues Ile136 to His155 is a DNA-binding region (H-T-H motif).

It belongs to the sigma-70 factor family. ECF subfamily. As to quaternary structure, interacts transiently with the RNAP core.

It localises to the cell membrane. Sigma factors are initiation factors that promote the attachment of RNA polymerase (RNAP) to specific initiation sites and are then released. May be involved in the regulation of iron metabolism. Associates with RNAP core during early growth phases, association decreases as cells age. The protein is ECF RNA polymerase sigma factor SigX (sigX) of Bacillus subtilis (strain 168).